Reading from the N-terminus, the 635-residue chain is 3-dehydroshikimate dehydratase (635 aa).

A divalent metal cation is bound by residues glutamate 134, aspartate 165, glutamine 191, and glutamate 239. VOC domains follow at residues 295-414 (GVEF…LVEQ) and 440-590 (RIDH…VYTE). Mg(2+) is bound by residues histidine 443, histidine 521, and glutamate 599.

This sequence belongs to the bacterial two-domain DSD family. As to quaternary structure, homodimer. Requires Co(2+) as cofactor. Ni(2+) is required as a cofactor. Mg(2+) serves as cofactor. It depends on Mn(2+) as a cofactor.

It catalyses the reaction 3-dehydroshikimate = 3,4-dihydroxybenzoate + H2O. Its pathway is aromatic compound metabolism; 3,4-dihydroxybenzoate biosynthesis. Catalyzes the conversion of 3-dehydroshikimate to protocatechuate (3,4-dihydroxybenzoate), a common intermediate of quinate and shikimate degradation pathways. The protein is 3-dehydroshikimate dehydratase of Pseudomonas putida (strain ATCC 47054 / DSM 6125 / CFBP 8728 / NCIMB 11950 / KT2440).